Here is a 95-residue protein sequence, read N- to C-terminus: Co-chaperonin GroES (95 aa).

The protein belongs to the GroES chaperonin family. In terms of assembly, heptamer of 7 subunits arranged in a ring. Interacts with the chaperonin GroEL.

It is found in the cytoplasm. Together with the chaperonin GroEL, plays an essential role in assisting protein folding. The GroEL-GroES system forms a nano-cage that allows encapsulation of the non-native substrate proteins and provides a physical environment optimized to promote and accelerate protein folding. GroES binds to the apical surface of the GroEL ring, thereby capping the opening of the GroEL channel. The sequence is that of Co-chaperonin GroES from Clostridium botulinum (strain ATCC 19397 / Type A).